Reading from the N-terminus, the 404-residue chain is Nicotinate phosphoribosyltransferase (404 aa).

Histidine 225 is subject to Phosphohistidine; by autocatalysis.

This sequence belongs to the NAPRTase family. Transiently phosphorylated on a His residue during the reaction cycle. Phosphorylation strongly increases the affinity for substrates and increases the rate of nicotinate D-ribonucleotide production. Dephosphorylation regenerates the low-affinity form of the enzyme, leading to product release.

It carries out the reaction nicotinate + 5-phospho-alpha-D-ribose 1-diphosphate + ATP + H2O = nicotinate beta-D-ribonucleotide + ADP + phosphate + diphosphate. The protein operates within cofactor biosynthesis; NAD(+) biosynthesis; nicotinate D-ribonucleotide from nicotinate: step 1/1. Functionally, catalyzes the synthesis of beta-nicotinate D-ribonucleotide from nicotinate and 5-phospho-D-ribose 1-phosphate at the expense of ATP. The sequence is that of Nicotinate phosphoribosyltransferase from Methanosarcina acetivorans (strain ATCC 35395 / DSM 2834 / JCM 12185 / C2A).